Reading from the N-terminus, the 407-residue chain is O-antigen polymerase (407 aa).

Transmembrane regions (helical) follow at residues 2 to 22 (LIIS…TLSV), 31 to 51 (VMVP…GIFV), 63 to 83 (YLFF…SYLY), 101 to 121 (YVFT…PVLM), 141 to 161 (YGIY…CAFF), 168 to 185 (LFCI…FLHG), 190 to 204 (IFSI…LSYI), 211 to 231 (FMFL…FFAY), 319 to 339 (ADFG…KGVL), 356 to 376 (FIMF…GWLF), and 382 to 402 (IAFM…RFVL).

It is found in the cell inner membrane. The enzyme catalyses n lipid-linked O-antigen repeat units = a lipid-linked O antigen + (n-1) polyisoprenyl diphosphate.. It participates in bacterial outer membrane biogenesis; LPS O-antigen biosynthesis. Polymerase involved in the biosynthesis of the lipopolysaccharide (LPS). Catalyzes the polymerization of the O-antigen repeat units on the periplasmic face of the inner membrane, leading to the formation of the lipid-linked O-antigen molecule. This is O-antigen polymerase (rfc) from Salmonella typhi.